The primary structure comprises 233 residues: Uridylate kinase (233 aa).

Residues Lys8–Gly11, Gly51, and Arg55 each bind ATP. UMP is bound by residues Asp68 and Thr129 to Thr136. Thr156, Tyr162, and Asp165 together coordinate ATP.

It belongs to the UMP kinase family. As to quaternary structure, homohexamer.

Its subcellular location is the cytoplasm. It catalyses the reaction UMP + ATP = UDP + ADP. The protein operates within pyrimidine metabolism; CTP biosynthesis via de novo pathway; UDP from UMP (UMPK route): step 1/1. With respect to regulation, inhibited by UTP. Catalyzes the reversible phosphorylation of UMP to UDP. This Thermosipho melanesiensis (strain DSM 12029 / CIP 104789 / BI429) protein is Uridylate kinase.